Reading from the N-terminus, the 366-residue chain is Ribosomal RNA large subunit methyltransferase M (366 aa).

S-adenosyl-L-methionine-binding positions include S188, 221-224, D240, D260, and D277; that span reads CPGG. K306 acts as the Proton acceptor in catalysis.

The protein belongs to the class I-like SAM-binding methyltransferase superfamily. RNA methyltransferase RlmE family. RlmM subfamily. As to quaternary structure, monomer.

The protein resides in the cytoplasm. It carries out the reaction cytidine(2498) in 23S rRNA + S-adenosyl-L-methionine = 2'-O-methylcytidine(2498) in 23S rRNA + S-adenosyl-L-homocysteine + H(+). Its function is as follows. Catalyzes the 2'-O-methylation at nucleotide C2498 in 23S rRNA. This is Ribosomal RNA large subunit methyltransferase M from Photorhabdus sp. (strain Az29).